The chain runs to 454 residues: Phosphoglucosamine mutase (454 aa).

Serine 104 acts as the Phosphoserine intermediate in catalysis. The Mg(2+) site is built by serine 104, aspartate 247, aspartate 249, and aspartate 251. At serine 104 the chain carries Phosphoserine.

Belongs to the phosphohexose mutase family. The cofactor is Mg(2+). In terms of processing, activated by phosphorylation.

The catalysed reaction is alpha-D-glucosamine 1-phosphate = D-glucosamine 6-phosphate. In terms of biological role, catalyzes the conversion of glucosamine-6-phosphate to glucosamine-1-phosphate. This Bifidobacterium animalis subsp. lactis (strain AD011) protein is Phosphoglucosamine mutase.